The chain runs to 457 residues: NADP-specific glutamate dehydrogenase (457 aa).

The active site involves Lys-113.

This sequence belongs to the Glu/Leu/Phe/Val dehydrogenases family. In terms of assembly, homohexamer.

It catalyses the reaction L-glutamate + NADP(+) + H2O = 2-oxoglutarate + NH4(+) + NADPH + H(+). The sequence is that of NADP-specific glutamate dehydrogenase (GDH) from Tuber borchii (White truffle).